The sequence spans 181 residues: Peptidyl-prolyl cis-trans isomerase H (181 aa).

Residues 17–180 (FFDIALGGVP…QDVIITQCGE (164 aa)) enclose the PPIase cyclophilin-type domain.

It belongs to the cyclophilin-type PPIase family. PPIase H subfamily.

It is found in the nucleus. The catalysed reaction is [protein]-peptidylproline (omega=180) = [protein]-peptidylproline (omega=0). Its function is as follows. PPIases accelerate the folding of proteins. It catalyzes the cis-trans isomerization of proline imidic peptide bonds in oligopeptides. This chain is Peptidyl-prolyl cis-trans isomerase H (cyp3), found in Aspergillus fumigatus (strain ATCC MYA-4609 / CBS 101355 / FGSC A1100 / Af293) (Neosartorya fumigata).